Here is a 305-residue protein sequence, read N- to C-terminus: UDP-3-O-acyl-N-acetylglucosamine deacetylase (305 aa).

3 residues coordinate Zn(2+): His-78, His-237, and Asp-241. His-264 serves as the catalytic Proton donor.

The protein belongs to the LpxC family. The cofactor is Zn(2+).

It catalyses the reaction a UDP-3-O-[(3R)-3-hydroxyacyl]-N-acetyl-alpha-D-glucosamine + H2O = a UDP-3-O-[(3R)-3-hydroxyacyl]-alpha-D-glucosamine + acetate. The protein operates within glycolipid biosynthesis; lipid IV(A) biosynthesis; lipid IV(A) from (3R)-3-hydroxytetradecanoyl-[acyl-carrier-protein] and UDP-N-acetyl-alpha-D-glucosamine: step 2/6. Catalyzes the hydrolysis of UDP-3-O-myristoyl-N-acetylglucosamine to form UDP-3-O-myristoylglucosamine and acetate, the committed step in lipid A biosynthesis. This is UDP-3-O-acyl-N-acetylglucosamine deacetylase from Burkholderia cenocepacia (strain HI2424).